Here is a 672-residue protein sequence, read N- to C-terminus: ATP-dependent zinc metalloprotease FtsH 1 (672 aa).

Residues 1-22 (MKKDSESNSSDKSNKEELSTGR) are disordered. Residues 1–23 (MKKDSESNSSDKSNKEELSTGRR) lie on the Cytoplasmic side of the membrane. Residues 24-44 (GGNPMIIALVITVLAAMLFFN) form a helical membrane-spanning segment. The Periplasmic segment spans residues 45–141 (QPEPSSLISA…KFSPPDNTAA (97 aa)). Residues 142–162 (ILNLLILVGLPLAIFFFIFMM) form a helical membrane-spanning segment. At 163 to 672 (IRRTRNDMMG…TSNASARRED (510 aa)) the chain is on the cytoplasmic side. 237–244 (GPPGTGKT) is an ATP binding site. His458 lines the Zn(2+) pocket. Glu459 is a catalytic residue. Zn(2+)-binding residues include His462 and Asp534. The segment at 642–672 (RLGDEEGKVEQIMAPEGAAERTSNASARRED) is disordered. The segment covering 662–672 (RTSNASARRED) has biased composition (polar residues).

This sequence in the central section; belongs to the AAA ATPase family. It in the C-terminal section; belongs to the peptidase M41 family. As to quaternary structure, homohexamer. The cofactor is Zn(2+).

It is found in the cell inner membrane. Functionally, acts as a processive, ATP-dependent zinc metallopeptidase for both cytoplasmic and membrane proteins. Plays a role in the quality control of integral membrane proteins. The sequence is that of ATP-dependent zinc metalloprotease FtsH 1 from Rhodopirellula baltica (strain DSM 10527 / NCIMB 13988 / SH1).